Reading from the N-terminus, the 416-residue chain is Exodeoxyribonuclease 7 large subunit (416 aa).

Belongs to the XseA family. Heterooligomer composed of large and small subunits.

The protein resides in the cytoplasm. It catalyses the reaction Exonucleolytic cleavage in either 5'- to 3'- or 3'- to 5'-direction to yield nucleoside 5'-phosphates.. Functionally, bidirectionally degrades single-stranded DNA into large acid-insoluble oligonucleotides, which are then degraded further into small acid-soluble oligonucleotides. This is Exodeoxyribonuclease 7 large subunit from Sulfurimonas denitrificans (strain ATCC 33889 / DSM 1251) (Thiomicrospira denitrificans (strain ATCC 33889 / DSM 1251)).